The following is a 54-amino-acid chain: uncharacterized protein (54 aa).

A disordered region spans residues 1–54; the sequence is MWTLKARKEHTGISGKPTARTDRHGSTRSGDSELQASARRFSRLPDRCGAQGVT.

This is an uncharacterized protein from Mycobacterium tuberculosis (strain ATCC 25618 / H37Rv).